Consider the following 862-residue polypeptide: Putative PIP5K1A and PSMD4-like protein (862 aa).

A PIPK domain is found at Thr-28–Val-396. Disordered stretches follow at residues Pro-404–Gly-424 and His-453–Ser-481. Residues Ser-412 to Gly-424 are compositionally biased toward low complexity. Residues Met-490–Ile-673 enclose the VWFA domain. Positions Ser-696–Arg-715 constitute a UIM 1 domain. Residues Gln-716–Asp-740 form a disordered region. Positions Gln-722–Ala-731 are enriched in low complexity. Residues Met-766–Ala-783 form the UIM 2 domain. A disordered region spans residues Asn-826 to Lys-862. The span at Lys-850 to Lys-862 shows a compositional bias: basic and acidic residues.

As to expression, testis-specific.

It is found in the cytoplasm. Its function is as follows. Has negligible PIP5 kinase activity. Binds to ubiquitinated proteins. This chain is Putative PIP5K1A and PSMD4-like protein (PIPSL), found in Homo sapiens (Human).